We begin with the raw amino-acid sequence, 354 residues long: Uroporphyrinogen decarboxylase (354 aa).

Residues 27–31, Phe46, Asp77, Tyr154, Thr209, and His327 each bind substrate; that span reads RQAGR.

The protein belongs to the uroporphyrinogen decarboxylase family. Homodimer.

Its subcellular location is the cytoplasm. The enzyme catalyses uroporphyrinogen III + 4 H(+) = coproporphyrinogen III + 4 CO2. The protein operates within porphyrin-containing compound metabolism; protoporphyrin-IX biosynthesis; coproporphyrinogen-III from 5-aminolevulinate: step 4/4. In terms of biological role, catalyzes the decarboxylation of four acetate groups of uroporphyrinogen-III to yield coproporphyrinogen-III. The sequence is that of Uroporphyrinogen decarboxylase from Salmonella typhi.